The chain runs to 208 residues: LexA repressor (208 aa).

The H-T-H motif DNA-binding region spans Val30–Glu50. Catalysis depends on for autocatalytic cleavage activity residues Ser129 and Lys167.

It belongs to the peptidase S24 family. Homodimer.

It carries out the reaction Hydrolysis of Ala-|-Gly bond in repressor LexA.. Its function is as follows. Represses a number of genes involved in the response to DNA damage (SOS response), including recA and lexA. In the presence of single-stranded DNA, RecA interacts with LexA causing an autocatalytic cleavage which disrupts the DNA-binding part of LexA, leading to derepression of the SOS regulon and eventually DNA repair. This Lacticaseibacillus casei (strain BL23) (Lactobacillus casei) protein is LexA repressor.